A 474-amino-acid chain; its full sequence is Type I restriction enzyme EcoBI specificity subunit (474 aa).

This sequence belongs to the type-I restriction system S methylase family. As to quaternary structure, the type I restriction/modification system is composed of three polypeptides R, M and S. The restriction enzyme has stoichiometry R(2)M(2)S(1) while the methyltransferase is M(2)S(1).

In terms of biological role, the specificity (S) subunit of a type I restriction enzyme; this subunit dictates DNA sequence specificity. The M and S subunits together form a methyltransferase (MTase) that methylates A-3 on the top strand and A-4 on the bottom strand of the sequence 5'-TGAN(8)TGCT-3'. In the presence of the R subunit the complex can also act as an endonuclease, binding to the same target sequence but cutting the DNA some distance from this site. Whether the DNA is cut or modified depends on the methylation state of the target sequence. When the target site is unmodified, the DNA is cut. When the target site is hemimethylated, the complex acts as a maintenance MTase modifying the DNA so that both strands become methylated. After locating a non-methylated recognition site, the enzyme complex serves as a molecular motor that translocates DNA in an ATP-dependent manner until a collision occurs that triggers cleavage. The chain is Type I restriction enzyme EcoBI specificity subunit from Escherichia coli.